The primary structure comprises 74 residues: Psi-conotoxin PrIIIE (74 aa).

Residues Met-1–Ala-19 form the signal peptide. A propeptide spanning residues Leu-20–Arg-50 is cleaved from the precursor. 3 disulfide bridges follow: Cys-54–Cys-66, Cys-55–Cys-71, and Cys-61–Cys-72. At Cys-72 the chain carries Cysteine amide.

Belongs to the conotoxin M superfamily. As to expression, expressed by the venom duct.

The protein localises to the secreted. In terms of biological role, psi-conotoxins act on postsynaptic membranes, and act as non-competitive antagonist of nicotinic acetylcholine receptors (nAChR). Reversibly inhibits both adult- and fetal-types nAChR. The inhibition potency against the adult- (alpha-1/beta-1/epsilon/delta) is higher than against the fetal-type (alpha-1/beta-1/gamma/delta). Induces flaccid paralysis in goldfish, but does not induce any remarkable behavior in mice and does not block action potential in directly stimulated frog muscle preparations. The chain is Psi-conotoxin PrIIIE from Conus parius (Cone snail).